The following is a 245-amino-acid chain: 1-(5-phosphoribosyl)-5-[(5-phosphoribosylamino)methylideneamino] imidazole-4-carboxamide isomerase (245 aa).

The active-site Proton acceptor is the Asp7. Asp129 serves as the catalytic Proton donor.

It belongs to the HisA/HisF family.

The protein localises to the cytoplasm. The catalysed reaction is 1-(5-phospho-beta-D-ribosyl)-5-[(5-phospho-beta-D-ribosylamino)methylideneamino]imidazole-4-carboxamide = 5-[(5-phospho-1-deoxy-D-ribulos-1-ylimino)methylamino]-1-(5-phospho-beta-D-ribosyl)imidazole-4-carboxamide. The protein operates within amino-acid biosynthesis; L-histidine biosynthesis; L-histidine from 5-phospho-alpha-D-ribose 1-diphosphate: step 4/9. The chain is 1-(5-phosphoribosyl)-5-[(5-phosphoribosylamino)methylideneamino] imidazole-4-carboxamide isomerase from Buchnera aphidicola subsp. Cinara cedri (strain Cc).